We begin with the raw amino-acid sequence, 105 residues long: Blood plasma apolipoprotein LAL1 (105 aa).

Residues 1–21 form the signal peptide; sequence MKLHVAALATLAVVCILAAGS. A propeptide spanning residues 22 to 29 is cleaved from the precursor; sequence EAAPKAMS.

As to expression, plasma.

The protein resides in the secreted. The sequence is that of Blood plasma apolipoprotein LAL1 from Petromyzon marinus (Sea lamprey).